The chain runs to 222 residues: Large ribosomal subunit protein uL4 (222 aa).

The tract at residues 67-87 (QKGTGNARAGSKRTNVRRGGG) is disordered.

It belongs to the universal ribosomal protein uL4 family. In terms of assembly, part of the 50S ribosomal subunit.

Its function is as follows. One of the primary rRNA binding proteins, this protein initially binds near the 5'-end of the 23S rRNA. It is important during the early stages of 50S assembly. It makes multiple contacts with different domains of the 23S rRNA in the assembled 50S subunit and ribosome. Forms part of the polypeptide exit tunnel. The protein is Large ribosomal subunit protein uL4 of Rhodopirellula baltica (strain DSM 10527 / NCIMB 13988 / SH1).